Consider the following 1195-residue polypeptide: Probable beta-tubulin polyglutamylase (1195 aa).

A disordered region spans residues 1–110 (MSQKDIYNKY…QTEMTDNQNE (110 aa)). Composition is skewed to acidic residues over residues 17 to 27 (DQQEEDDDENQ) and 44 to 79 (QGED…EENN). 2 coiled-coil regions span residues 59–103 (DEEQ…QQTE) and 144–260 (QDMD…QSEQ). Over residues 80–89 (QDQQNNSESN) the composition is skewed to low complexity. The segment covering 90–110 (LQYDKTNQKNQQTEMTDNQNE) has biased composition (polar residues). The segment at 281–343 (PKNDVDQYTG…NKKEQAKKQQ (63 aa)) is disordered. A compositionally biased stretch (acidic residues) spans 294-316 (DSGESDEEANNEDDDEDEDDESE). The span at 322–334 (RKNKAQLLKKKNN) shows a compositional bias: basic residues. In terms of domain architecture, TTL spans 350–703 (KQTLVLNVAD…TCKAKNEIIN (354 aa)). ATP-binding positions include 500–503 (QRYL), Lys-513, and Asp-515. The tract at residues 674 to 756 (PLDSYIKKNT…GFERIFPMED (83 aa)) is c-MTBD region. A disordered region spans residues 783–862 (RNTKKVTEDP…ETIQCEDQEQ (80 aa)). A compositionally biased stretch (polar residues) spans 825–849 (PNSQTTINKGIPGQNGQRPSSSQLN). Over residues 850–860 (EEGETIQCEDQ) the composition is skewed to acidic residues.

The protein resides in the cytoplasm. The protein localises to the cytoskeleton. Its subcellular location is the cell projection. It localises to the cilium. It is found in the cilium basal body. Probable tubulin polyglutamylase with a strong preference for beta-tubulin. This Tetrahymena thermophila (strain SB210) protein is Probable beta-tubulin polyglutamylase (Ttll6a).